Consider the following 406-residue polypeptide: NIPA-like protein 3 (406 aa).

Transmembrane regions (helical) follow at residues 33 to 53 (NLIG…ALNL), 76 to 96 (WWLG…SYAF), 101 to 121 (LIVP…IIFI), and 135 to 155 (VLSF…VTFA). N-linked (GlcNAc...) asparagine glycosylation occurs at Asn166. A run of 5 helical transmembrane segments spans residues 171–191 (LVSW…CLLL), 202–222 (IVVI…TVKA), 240–260 (PIFY…AAFL), 271–291 (LIAS…GAIF), and 300–320 (VLHI…VFLI). Ser372 carries the phosphoserine modification.

This sequence belongs to the NIPA family.

Its subcellular location is the membrane. This chain is NIPA-like protein 3 (NIPAL3), found in Homo sapiens (Human).